Here is a 653-residue protein sequence, read N- to C-terminus: Sodium-dependent phosphate transporter 2 (653 aa).

At 1 to 5 (MVLDE) the chain is on the extracellular side. A helical transmembrane segment spans residues 6–26 (YMWMVIVGFIIAFVLAFSVGA). Over 27–46 (NDVANSFGTAVGSGVVTLRQ) the chain is Cytoplasmic. A helical membrane pass occupies residues 47–67 (ACILASIFETIGSVLLGAKVG). Residues 68–86 (ETIRKGIIDVNLYNNTVDL) are Extracellular-facing. Asn81 carries an N-linked (GlcNAc...) asparagine glycan. Residues 87–107 (LMAGEVSAMVGSAVWQLIASF) form a helical membrane-spanning segment. The Cytoplasmic segment spans residues 108-109 (LK). The chain crosses the membrane as a helical span at residues 110 to 130 (LPVSGTHCIVGATIGFSLVAV). Residues 131–142 (GAHSVQWMQLVK) lie on the Extracellular side of the membrane. The helical transmembrane segment at 143–163 (IVASWFISPLLSGLMSGALFL) threads the bilayer. Residues 164-187 (MIKFFILNKEDPVPNGLKALPVFY) are Cytoplasmic-facing. A helical membrane pass occupies residues 188–208 (AATIGINVFSILFTGAPLLGL). At 209–217 (QTFPVWATA) the chain is on the extracellular side. A helical membrane pass occupies residues 218–238 (LLSVGIAIVFALVVWFFVCPW). Topologically, residues 239 to 483 (MKKKIASRLK…EDKEEKDKSQ (245 aa)) are cytoplasmic. Residues 275–310 (LPGAKGNDESVLPLTSSSPDAAVSSESVSNGNTRVP) form a disordered region. The segment covering 290-303 (SSSPDAAVSSESVS) has biased composition (low complexity). The chain crosses the membrane as a helical span at residues 484–504 (VHLLFHFLQILTACFGSFAHG). At 505-532 (GNDVSNAIGPLVALWLIYQQGGVMQEAS) the chain is on the extracellular side. Residues 533-553 (TPVWLLLYGGVGICAGLWVWG) traverse the membrane as a helical segment. Residues 554–572 (RRVIQTMGKDLTPITPSSG) lie on the Cytoplasmic side of the membrane. The helical transmembrane segment at 573–587 (FTIELASAFTVVVAS) threads the bilayer. Residues 588 to 594 (NIGLPIS) are Extracellular-facing. Residues 595-610 (TTHCKVGSVVAVGWIR) traverse the membrane as a helical segment. The Cytoplasmic segment spans residues 611–622 (SRKAVDWRLFRN). Residues 623-643 (IFLAWFVTVPVAGLFSAGVMA) traverse the membrane as a helical segment. Over 644–653 (ILQYGILPYV) the chain is Extracellular.

This sequence belongs to the inorganic phosphate transporter (PiT) (TC 2.A.20) family. Homodimer.

The protein resides in the cell membrane. Its subcellular location is the apical cell membrane. The enzyme catalyses 2 Na(+)(out) + phosphate(out) = 2 Na(+)(in) + phosphate(in). In terms of biological role, sodium-phosphate symporter which preferentially transports the monovalent form of phosphate with a stoichiometry of two sodium ions per phosphate ion. In Xenopus laevis (African clawed frog), this protein is Sodium-dependent phosphate transporter 2 (slc20a2).